Consider the following 821-residue polypeptide: Ent-isokaur-15-ene synthase (821 aa).

Residues aspartate 556, aspartate 560, asparagine 701, threonine 705, and glutamate 709 each coordinate Mg(2+). The DDXXD motif motif lies at aspartate 556–aspartate 560.

It belongs to the terpene synthase family. It depends on Mg(2+) as a cofactor.

It catalyses the reaction ent-copalyl diphosphate = ent-isokaurene + diphosphate. Its pathway is secondary metabolite biosynthesis; terpenoid biosynthesis. Its function is as follows. Involved in the biosynthesis of ent-kaurene diterpenoids natural products. Catalyzes the conversion of ent-copalyl diphosphate to the phytoalexin precursor ent-isokaur-15-ene. This is Ent-isokaur-15-ene synthase from Oryza sativa subsp. indica (Rice).